Here is a 157-residue protein sequence, read N- to C-terminus: UPF0262 protein Atu0536 (157 aa).

The protein belongs to the UPF0262 family.

This chain is UPF0262 protein Atu0536, found in Agrobacterium fabrum (strain C58 / ATCC 33970) (Agrobacterium tumefaciens (strain C58)).